The chain runs to 616 residues: Vitamin B12 transporter BtuB (616 aa).

Residues 1 to 20 (MIKKISLLTALSVTAFSGWA) form the signal peptide. The TonB box motif lies at 26–33 (DSLVVTAN). One can recognise a TBDR plug domain in the interval 38-152 (PVNTVLAPTS…IGGVVNIITT (115 aa)). Residues L83, S85, N92, and 110-111 (VT) each bind cyanocob(III)alamin. Residues 155-616 (KDGTTLNAGI…EYTLSGSYTF (462 aa)) enclose the TBDR beta-barrel domain. Transmembrane regions (beta stranded) follow at residues 158 to 165 (TTLNAGIG), 169 to 178 (YQNYGGSTQQ), and 184 to 195 (TRVTLAGDYTYT). Residues D199, Q211, D213, and D215 each coordinate Ca(2+). The next 2 beta stranded transmembrane spans lie at 217–227 (FMNKTLYGALE) and 232–248 (DQWTGFVRGYGYSNRTA). Ca(2+)-binding residues include Y249, D250, and D263. Beta stranded transmembrane passes span 265–279 (RQLYSQTWDAGLRFN), 281–298 (DLFHSQLLSSYSHSKDYN), 311–327 (TLDEIKQYNVQWTNAVD), 330–339 (HGNIGAGVDW), 355–371 (YDLRNTGVYLTALQKFG), 373–383 (VTLEGAVRSDD), 387–402 (FGRHGTWQSSAAWEFI), 405–419 (YRFIASYGTAYKAPN), 436–445 (ESKQWEGAFE), 451–460 (VNWRVSAYRN), 475–492 (YYNVGKARIKGVEATASF), 496–511 (PLTHTLGYDYVDARNA), 519–531 (RRAKQQVKYQLDT), 537–552 (DWSLTYHYLGTRYDTD), 560–574 (NVKLGGVSLWDVAVS), 587–598 (IANLFDKDYETA), and 604–616 (AGREYTLSGSYTF). T311 provides a ligand contact to cyanocob(III)alamin. R519 contacts cyanocob(III)alamin. The short motif at 599–616 (YGYATAGREYTLSGSYTF) is the TonB C-terminal box element.

It belongs to the TonB-dependent receptor family. BtuB (TC 1.B.14.3.1) subfamily.

It localises to the cell outer membrane. Functionally, involved in the active translocation of vitamin B12 (cyanocobalamin) across the outer membrane to the periplasmic space. It derives its energy for transport by interacting with the trans-periplasmic membrane protein TonB. This Cronobacter sakazakii (strain ATCC BAA-894) (Enterobacter sakazakii) protein is Vitamin B12 transporter BtuB.